We begin with the raw amino-acid sequence, 539 residues long: GMP synthase [glutamine-hydrolyzing] (539 aa).

The 200-residue stretch at 4 to 203 folds into the Glutamine amidotransferase type-1 domain; that stretch reads KILILDFGSQ…VHDICGCKSD (200 aa). The active-site Nucleophile is cysteine 82. Active-site residues include histidine 177 and glutamate 179. The GMPS ATP-PPase domain maps to 204 to 395; that stretch reads WNMPDYIAEA…LGLPHDMVYR (192 aa). Position 231–237 (231–237) interacts with ATP; it reads SGGVDSS.

As to quaternary structure, homodimer.

The enzyme catalyses XMP + L-glutamine + ATP + H2O = GMP + L-glutamate + AMP + diphosphate + 2 H(+). It functions in the pathway purine metabolism; GMP biosynthesis; GMP from XMP (L-Gln route): step 1/1. Its function is as follows. Catalyzes the synthesis of GMP from XMP. In Janthinobacterium sp. (strain Marseille) (Minibacterium massiliensis), this protein is GMP synthase [glutamine-hydrolyzing].